Consider the following 333-residue polypeptide: Glycerol-3-phosphate dehydrogenase [NAD(P)+] (333 aa).

Residues Tyr-14, His-34, and Lys-108 each coordinate NADPH. Sn-glycerol 3-phosphate-binding residues include Lys-108, Gly-137, and Thr-139. Ala-141 lines the NADPH pocket. Residues Lys-193, Asp-247, Ser-257, Arg-258, and Asn-259 each coordinate sn-glycerol 3-phosphate. The active-site Proton acceptor is the Lys-193. Arg-258 lines the NADPH pocket. 2 residues coordinate NADPH: Leu-282 and Glu-284.

Belongs to the NAD-dependent glycerol-3-phosphate dehydrogenase family.

It localises to the cytoplasm. The catalysed reaction is sn-glycerol 3-phosphate + NAD(+) = dihydroxyacetone phosphate + NADH + H(+). The enzyme catalyses sn-glycerol 3-phosphate + NADP(+) = dihydroxyacetone phosphate + NADPH + H(+). It functions in the pathway membrane lipid metabolism; glycerophospholipid metabolism. Catalyzes the reduction of the glycolytic intermediate dihydroxyacetone phosphate (DHAP) to sn-glycerol 3-phosphate (G3P), the key precursor for phospholipid synthesis. In Blochmanniella floridana, this protein is Glycerol-3-phosphate dehydrogenase [NAD(P)+].